The sequence spans 389 residues: S-adenosylmethionine synthase (389 aa).

His15 lines the ATP pocket. Mg(2+) is bound at residue Asp17. Glu43 serves as a coordination point for K(+). Residues Glu56 and Gln99 each coordinate L-methionine. Residues 99 to 109 (QSPDIAQGVNE) form a flexible loop region. ATP is bound by residues 166–168 (DAK), 234–235 (RF), Asp243, 249–250 (RK), Ala266, and Lys270. Asp243 contributes to the L-methionine binding site. Residue Lys274 coordinates L-methionine.

Belongs to the AdoMet synthase family. Homotetramer; dimer of dimers. Requires Mg(2+) as cofactor. It depends on K(+) as a cofactor.

The protein localises to the cytoplasm. The enzyme catalyses L-methionine + ATP + H2O = S-adenosyl-L-methionine + phosphate + diphosphate. It participates in amino-acid biosynthesis; S-adenosyl-L-methionine biosynthesis; S-adenosyl-L-methionine from L-methionine: step 1/1. Catalyzes the formation of S-adenosylmethionine (AdoMet) from methionine and ATP. The overall synthetic reaction is composed of two sequential steps, AdoMet formation and the subsequent tripolyphosphate hydrolysis which occurs prior to release of AdoMet from the enzyme. This is S-adenosylmethionine synthase from Neisseria meningitidis serogroup B (strain ATCC BAA-335 / MC58).